Reading from the N-terminus, the 130-residue chain is Methylglyoxal synthase (130 aa).

The MGS-like domain occupies 1 to 130; it reads MSKPRIALIA…DLARTMQDVC (130 aa). Residues H11, K15, 37–40, and 57–58 contribute to the substrate site; these read TGTT and SG. The Proton donor/acceptor role is filled by D63. H90 provides a ligand contact to substrate.

This sequence belongs to the methylglyoxal synthase family.

It carries out the reaction dihydroxyacetone phosphate = methylglyoxal + phosphate. Its function is as follows. Catalyzes the formation of methylglyoxal from dihydroxyacetone phosphate. This chain is Methylglyoxal synthase, found in Burkholderia multivorans (strain ATCC 17616 / 249).